A 415-amino-acid chain; its full sequence is Branched-chain-amino-acid aminotransferase 5, chloroplastic (415 aa).

The transit peptide at 1 to 65 (MERSAVASGF…IVSEVSRNRR (65 aa)) directs the protein to the chloroplast. Position 261 is an N6-(pyridoxal phosphate)lysine (K261).

This sequence belongs to the class-IV pyridoxal-phosphate-dependent aminotransferase family. It depends on pyridoxal 5'-phosphate as a cofactor.

It is found in the plastid. It localises to the chloroplast. It catalyses the reaction L-leucine + 2-oxoglutarate = 4-methyl-2-oxopentanoate + L-glutamate. The catalysed reaction is L-isoleucine + 2-oxoglutarate = (S)-3-methyl-2-oxopentanoate + L-glutamate. The enzyme catalyses L-valine + 2-oxoglutarate = 3-methyl-2-oxobutanoate + L-glutamate. It participates in amino-acid biosynthesis; L-isoleucine biosynthesis; L-isoleucine from 2-oxobutanoate: step 4/4. Its pathway is amino-acid biosynthesis; L-leucine biosynthesis; L-leucine from 3-methyl-2-oxobutanoate: step 4/4. The protein operates within amino-acid biosynthesis; L-valine biosynthesis; L-valine from pyruvate: step 4/4. Its function is as follows. Converts 2-oxo acids to branched-chain amino acids. Acts on leucine, isoleucine and valine. The sequence is that of Branched-chain-amino-acid aminotransferase 5, chloroplastic (BCAT5) from Arabidopsis thaliana (Mouse-ear cress).